The following is a 213-amino-acid chain: Transmembrane emp24 domain-containing protein p24delta8 (213 aa).

A signal peptide spans 1 to 22 (MDLCRSSILLLIIALLSPRTLS). The Lumenal segment spans residues 23 to 180 (MRYELKSSKT…QELNRSTNSK (158 aa)). The 117-residue stretch at 32-148 (TKCIGEEIHE…VDMMEYQVKT (117 aa)) folds into the GOLD domain. N97 carries an N-linked (GlcNAc...) asparagine glycan. Residues 163–176 (LREREEEMQELNRS) are a coiled coil. R166 is subject to Omega-N-methylated arginine. An N-linked (GlcNAc...) asparagine glycan is attached at N174. A helical membrane pass occupies residues 181-203 (MAWLSFGSLVVCLSVAGLQFWHL). The tract at residues 202 to 213 (HLKTFFEKKKLI) is interaction with ARF1. Topologically, residues 204–213 (KTFFEKKKLI) are cytoplasmic. Positions 206-207 (FF) match the COPII vesicle coat-binding motif. The COPI vesicle coat-binding signature appears at 206–213 (FFEKKKLI).

This sequence belongs to the EMP24/GP25L family. In terms of assembly, probably oligomerizes with other members of the EMP24/GP25L family. Associates with the COPI vesicle coat (coatomer). Associates with the COPII vesicle coat (coatomer). Interacts with ARF1 (GDP-bound).

The protein resides in the endoplasmic reticulum membrane. Its subcellular location is the golgi apparatus. It localises to the cis-Golgi network membrane. It is found in the golgi stack membrane. Involved in vesicular protein trafficking. Mainly functions in the early secretory pathway. Thought to act as cargo receptor at the lumenal side for incorporation of secretory cargo molecules into transport vesicles and to be involved in vesicle coat formation at the cytoplasmic side. On Golgi membranes, acts as a primary receptor for ARF1-GDP which is involved in COPI-vesicle formation. The polypeptide is Transmembrane emp24 domain-containing protein p24delta8 (Arabidopsis thaliana (Mouse-ear cress)).